A 331-amino-acid chain; its full sequence is MSKTFVKSKEMGELVNTPSWMDKGLGSQNEVKEEESRPGTYGMLSSLTEEHDSIEEEEEEEEDGEKPKRRGPKKKKMTKARLERFRARRVKANARERTRMHGLNDALDNLRRVMPCYSKTQKLSKIETLRLARNYIWALSEVLETGQTPEGKGFVEMLCKGLSQPTSNLVAGCLQLGPQSVLLEKHEDKSPICDSAISVHNFNYQSPGLPSPPYGHMETHLLHLKPQVFKSLGESSFGSHLPDCSTPPYEGPLTPPLSISGNFSLKQDGSPDLEKSYSFMPHYPSSSLSSGHVHSTPFQAGTPRYDVPIDMSYDSYPHHGIGTQLNTVFTE.

The disordered stretch occupies residues 1 to 80; sequence MSKTFVKSKE…GPKKKKMTKA (80 aa). Over residues 52 to 64 the composition is skewed to acidic residues; the sequence is DSIEEEEEEEEDG. Over residues 67–79 the composition is skewed to basic residues; that stretch reads PKRRGPKKKKMTK. In terms of domain architecture, bHLH spans 87–139; sequence ARRVKANARERTRMHGLNDALDNLRRVMPCYSKTQKLSKIETLRLARNYIWAL. The segment at 246 to 265 is disordered; that stretch reads TPPYEGPLTPPLSISGNFSL.

Efficient DNA binding requires dimerization with another bHLH protein. Post-translationally, serine or threonine phosphorylation within the basic region may regulate neurogenic activity.

The protein localises to the nucleus. Its function is as follows. Probably acts as a transcriptional activator. Mediates neuronal differentiation. Required for the regulation of amacrine cell fate specification in the retina. The polypeptide is Neurogenic differentiation factor 4 (NEUROD4) (Homo sapiens (Human)).